The chain runs to 184 residues: Shikimate kinase (184 aa).

Gly15–Ser20 is an ATP binding site. Thr19 serves as a coordination point for Mg(2+). Asp37, Arg61, and Gly83 together coordinate substrate. Arg123 serves as a coordination point for ATP. Substrate is bound at residue Arg142.

The protein belongs to the shikimate kinase family. Monomer. Mg(2+) serves as cofactor.

It localises to the cytoplasm. It carries out the reaction shikimate + ATP = 3-phosphoshikimate + ADP + H(+). The protein operates within metabolic intermediate biosynthesis; chorismate biosynthesis; chorismate from D-erythrose 4-phosphate and phosphoenolpyruvate: step 5/7. Functionally, catalyzes the specific phosphorylation of the 3-hydroxyl group of shikimic acid using ATP as a cosubstrate. The chain is Shikimate kinase from Coxiella burnetii (strain CbuK_Q154) (Coxiella burnetii (strain Q154)).